Consider the following 113-residue polypeptide: ATP synthase epsilon chain (113 aa).

Belongs to the ATPase epsilon chain family. In terms of assembly, F-type ATPases have 2 components, CF(1) - the catalytic core - and CF(0) - the membrane proton channel. CF(1) has five subunits: alpha(3), beta(3), gamma(1), delta(1), epsilon(1). CF(0) has three main subunits: a, b and c.

The protein localises to the cell membrane. In terms of biological role, produces ATP from ADP in the presence of a proton gradient across the membrane. This chain is ATP synthase epsilon chain, found in Wolbachia pipientis subsp. Culex pipiens (strain wPip).